Here is a 492-residue protein sequence, read N- to C-terminus: Cysteine--tRNA ligase (492 aa).

A Zn(2+)-binding site is contributed by cysteine 27. Positions 29–39 match the 'HIGH' region motif; that stretch reads VTVYDLCHLGH. Zn(2+) is bound by residues cysteine 211, histidine 236, and glutamate 240. The short motif at 268–272 is the 'KMSKS' region element; sequence KMSKS. Residue lysine 271 participates in ATP binding.

It belongs to the class-I aminoacyl-tRNA synthetase family. As to quaternary structure, monomer. It depends on Zn(2+) as a cofactor.

It localises to the cytoplasm. The catalysed reaction is tRNA(Cys) + L-cysteine + ATP = L-cysteinyl-tRNA(Cys) + AMP + diphosphate. The sequence is that of Cysteine--tRNA ligase from Prochlorococcus marinus subsp. pastoris (strain CCMP1986 / NIES-2087 / MED4).